Reading from the N-terminus, the 390-residue chain is Galactokinase (390 aa).

34-37 serves as a coordination point for substrate; it reads EHTD. ATP is bound by residues Ser68 and 122-128; that span reads GSGLSSS. Mg(2+) contacts are provided by Ser128 and Glu160. Asp172 functions as the Proton acceptor in the catalytic mechanism. Residue Tyr221 coordinates substrate.

It belongs to the GHMP kinase family. GalK subfamily.

The protein resides in the cytoplasm. The enzyme catalyses alpha-D-galactose + ATP = alpha-D-galactose 1-phosphate + ADP + H(+). It functions in the pathway carbohydrate metabolism; galactose metabolism. Its function is as follows. Catalyzes the transfer of the gamma-phosphate of ATP to D-galactose to form alpha-D-galactose-1-phosphate (Gal-1-P). The polypeptide is Galactokinase (Chloroflexus aggregans (strain MD-66 / DSM 9485)).